The following is a 426-amino-acid chain: Glutamate-1-semialdehyde 2,1-aminomutase (426 aa).

At K268 the chain carries N6-(pyridoxal phosphate)lysine.

This sequence belongs to the class-III pyridoxal-phosphate-dependent aminotransferase family. HemL subfamily. The cofactor is pyridoxal 5'-phosphate.

It localises to the cytoplasm. It carries out the reaction (S)-4-amino-5-oxopentanoate = 5-aminolevulinate. It functions in the pathway porphyrin-containing compound metabolism; protoporphyrin-IX biosynthesis; 5-aminolevulinate from L-glutamyl-tRNA(Glu): step 2/2. This chain is Glutamate-1-semialdehyde 2,1-aminomutase, found in Saccharolobus islandicus (strain Y.N.15.51 / Yellowstone #2) (Sulfolobus islandicus).